The primary structure comprises 624 residues: Dihydroxy-acid dehydratase (624 aa).

Residue Asp-81 coordinates Mg(2+). A [2Fe-2S] cluster-binding site is contributed by Cys-122. Mg(2+) contacts are provided by Asp-123 and Lys-124. Residue Lys-124 is modified to N6-carboxylysine. Cys-195 serves as a coordination point for [2Fe-2S] cluster. A Mg(2+)-binding site is contributed by Glu-499. The active-site Proton acceptor is the Ser-525.

The protein belongs to the IlvD/Edd family. In terms of assembly, homodimer. The cofactor is [2Fe-2S] cluster. It depends on Mg(2+) as a cofactor.

The catalysed reaction is (2R)-2,3-dihydroxy-3-methylbutanoate = 3-methyl-2-oxobutanoate + H2O. It carries out the reaction (2R,3R)-2,3-dihydroxy-3-methylpentanoate = (S)-3-methyl-2-oxopentanoate + H2O. It functions in the pathway amino-acid biosynthesis; L-isoleucine biosynthesis; L-isoleucine from 2-oxobutanoate: step 3/4. Its pathway is amino-acid biosynthesis; L-valine biosynthesis; L-valine from pyruvate: step 3/4. Its function is as follows. Functions in the biosynthesis of branched-chain amino acids. Catalyzes the dehydration of (2R,3R)-2,3-dihydroxy-3-methylpentanoate (2,3-dihydroxy-3-methylvalerate) into 2-oxo-3-methylpentanoate (2-oxo-3-methylvalerate) and of (2R)-2,3-dihydroxy-3-methylbutanoate (2,3-dihydroxyisovalerate) into 2-oxo-3-methylbutanoate (2-oxoisovalerate), the penultimate precursor to L-isoleucine and L-valine, respectively. This is Dihydroxy-acid dehydratase from Shewanella baltica (strain OS155 / ATCC BAA-1091).